Here is a 308-residue protein sequence, read N- to C-terminus: Oligopeptide transport system permease protein AmiD (308 aa).

6 helical membrane-spanning segments follow: residues 43–63 (TVVM…YPMF), 111–131 (ILIS…VGGI), 145–167 (VYNV…SIGA), 171–193 (NLIF…VQIL), 234–254 (MLPS…GLPI), and 274–294 (AYLF…LFVV). In terms of domain architecture, ABC transmembrane type-1 spans 107–295 (ARNSILISVI…LVSLSLFVVG (189 aa)).

This sequence belongs to the binding-protein-dependent transport system permease family. OppBC subfamily.

The protein localises to the cell membrane. Its function is as follows. Part of the binding-protein-dependent transport system for oligopeptides; probably responsible for the translocation of the substrate across the membrane. This Streptococcus pneumoniae (strain ATCC BAA-255 / R6) protein is Oligopeptide transport system permease protein AmiD (amiD).